The chain runs to 407 residues: Tyrosine--tRNA ligase (407 aa).

Residue Y35 coordinates L-tyrosine. Residues 40 to 49 carry the 'HIGH' region motif; that stretch reads PTADSLHVGH. L-tyrosine-binding residues include Y168 and Q172. The 'KMSKS' region signature appears at 228 to 232; sequence KMGKT. K231 serves as a coordination point for ATP. The 65-residue stretch at 341–405 folds into the S4 RNA-binding domain; the sequence is NPLVDLLAKC…RGKKNFNRIV (65 aa).

Belongs to the class-I aminoacyl-tRNA synthetase family. TyrS type 1 subfamily. In terms of assembly, homodimer.

It is found in the cytoplasm. It catalyses the reaction tRNA(Tyr) + L-tyrosine + ATP = L-tyrosyl-tRNA(Tyr) + AMP + diphosphate + H(+). Its function is as follows. Catalyzes the attachment of tyrosine to tRNA(Tyr) in a two-step reaction: tyrosine is first activated by ATP to form Tyr-AMP and then transferred to the acceptor end of tRNA(Tyr). This Clostridium botulinum (strain 657 / Type Ba4) protein is Tyrosine--tRNA ligase.